We begin with the raw amino-acid sequence, 318 residues long: Methionine import ATP-binding protein MetN (318 aa).

The 236-residue stretch at isoleucine 2–glutamate 237 folds into the ABC transporter domain. Glycine 34–serine 41 contributes to the ATP binding site.

It belongs to the ABC transporter superfamily. Methionine importer (TC 3.A.1.24) family. In terms of assembly, the complex is composed of two ATP-binding proteins (MetN), two transmembrane proteins (MetI) and a solute-binding protein (MetQ).

The protein resides in the cell membrane. The enzyme catalyses L-methionine(out) + ATP + H2O = L-methionine(in) + ADP + phosphate + H(+). It carries out the reaction D-methionine(out) + ATP + H2O = D-methionine(in) + ADP + phosphate + H(+). Its function is as follows. Part of the ABC transporter complex MetNIQ involved in methionine import. Responsible for energy coupling to the transport system. The protein is Methionine import ATP-binding protein MetN of Clostridium tetani (strain Massachusetts / E88).